We begin with the raw amino-acid sequence, 484 residues long: Glutamyl-tRNA(Gln) amidotransferase subunit A (484 aa).

Catalysis depends on charge relay system residues K76 and S151. S175 acts as the Acyl-ester intermediate in catalysis.

This sequence belongs to the amidase family. GatA subfamily. As to quaternary structure, heterotrimer of A, B and C subunits.

It carries out the reaction L-glutamyl-tRNA(Gln) + L-glutamine + ATP + H2O = L-glutaminyl-tRNA(Gln) + L-glutamate + ADP + phosphate + H(+). Functionally, allows the formation of correctly charged Gln-tRNA(Gln) through the transamidation of misacylated Glu-tRNA(Gln) in organisms which lack glutaminyl-tRNA synthetase. The reaction takes place in the presence of glutamine and ATP through an activated gamma-phospho-Glu-tRNA(Gln). This is Glutamyl-tRNA(Gln) amidotransferase subunit A from Hahella chejuensis (strain KCTC 2396).